The following is a 340-amino-acid chain: N(4)-(Beta-N-acetylglucosaminyl)-L-asparaginase (340 aa).

Residues 1–45 form the signal peptide; sequence MRIIYKQQTMNNNRRDFIKKLGIATAAIAINPLEAKNLLDTSEPK. Thr197 acts as the Nucleophile in catalysis. Substrate-binding positions include 225–228 and 248–251; these read RVGD and TGHG.

This sequence belongs to the Ntn-hydrolase family. As to quaternary structure, heterotetramer of two alpha and two beta chains arranged as a dimer of alpha/beta heterodimers. Cleaved into an alpha and beta chain by autocatalysis; this activates the enzyme. The N-terminal residue of the beta subunit is responsible for the nucleophile hydrolase activity.

Its subcellular location is the periplasm. The catalysed reaction is N(4)-(beta-N-acetyl-D-glucosaminyl)-L-asparagine + H2O = N-acetyl-beta-D-glucosaminylamine + L-aspartate + H(+). Functionally, cleaves the GlcNAc-Asn bond which joins oligosaccharides to the peptide of asparagine-linked glycoproteins. Requires that the glycosylated asparagine moiety is not substituted on its N-(R1) and C- (R2) terminus. This Elizabethkingia miricola (Chryseobacterium miricola) protein is N(4)-(Beta-N-acetylglucosaminyl)-L-asparaginase.